The sequence spans 75 residues: Ribonuclease pancreatic (75 aa).

Disulfide bonds link Cys-7-Cys-65 and Cys-46-Cys-53. An N-linked (GlcNAc...) asparagine glycan is attached at Asn-15. Residues Lys-22 to Thr-26, Lys-47, and Arg-66 contribute to the substrate site.

Belongs to the pancreatic ribonuclease family. Monomer. Interacts with and forms tight 1:1 complexes with RNH1. Dimerization of two such complexes may occur. Interaction with RNH1 inhibits this protein. As to expression, pancreas.

Its subcellular location is the secreted. It carries out the reaction an [RNA] containing cytidine + H2O = an [RNA]-3'-cytidine-3'-phosphate + a 5'-hydroxy-ribonucleotide-3'-[RNA].. The catalysed reaction is an [RNA] containing uridine + H2O = an [RNA]-3'-uridine-3'-phosphate + a 5'-hydroxy-ribonucleotide-3'-[RNA].. In terms of biological role, endonuclease that catalyzes the cleavage of RNA on the 3' side of pyrimidine nucleotides. Acts on single-stranded and double-stranded RNA. The chain is Ribonuclease pancreatic (rnase1) from Oryx leucoryx (Arabian oryx).